A 342-amino-acid polypeptide reads, in one-letter code: GTPase Obg (342 aa).

Residues 1–159 form the Obg domain; sequence MKFIDEAKIY…RWIRLELKLL (159 aa). In terms of domain architecture, OBG-type G spans 160-332; the sequence is ADVGIIGLPN…LLYKIGEALK (173 aa). Residues 166 to 173, 191 to 195, 214 to 217, 284 to 287, and 313 to 315 contribute to the GTP site; these read GLPNVGKS, FTTLT, DIPG, NKTD, and SAA. Mg(2+) contacts are provided by Ser-173 and Thr-193.

Belongs to the TRAFAC class OBG-HflX-like GTPase superfamily. OBG GTPase family. In terms of assembly, monomer. Mg(2+) serves as cofactor.

It is found in the cytoplasm. Functionally, an essential GTPase which binds GTP, GDP and possibly (p)ppGpp with moderate affinity, with high nucleotide exchange rates and a fairly low GTP hydrolysis rate. Plays a role in control of the cell cycle, stress response, ribosome biogenesis and in those bacteria that undergo differentiation, in morphogenesis control. The polypeptide is GTPase Obg (Syntrophus aciditrophicus (strain SB)).